A 267-amino-acid chain; its full sequence is Small ribosomal subunit protein uS3 (267 aa).

The 69-residue stretch at 43-111 folds into the KH type-2 domain; the sequence is IRKEMSKDLE…QVQLNIFEVK (69 aa). The disordered stretch occupies residues 216 to 267; it reads FEEQQAQQNNRPGRRGGDRRPRRGNRSAAPQAAEAPKAEAPAEAAPAAETKE. Low complexity predominate over residues 241–267; that stretch reads RSAAPQAAEAPKAEAPAEAAPAAETKE.

Belongs to the universal ribosomal protein uS3 family. As to quaternary structure, part of the 30S ribosomal subunit. Forms a tight complex with proteins S10 and S14.

Its function is as follows. Binds the lower part of the 30S subunit head. Binds mRNA in the 70S ribosome, positioning it for translation. The polypeptide is Small ribosomal subunit protein uS3 (Bifidobacterium longum subsp. infantis (strain ATCC 15697 / DSM 20088 / JCM 1222 / NCTC 11817 / S12)).